Reading from the N-terminus, the 446-residue chain is Methylenetetrahydrofolate--tRNA-(uracil-5-)-methyltransferase TrmFO (446 aa).

8–13 (GGGLAG) provides a ligand contact to FAD.

This sequence belongs to the MnmG family. TrmFO subfamily. Requires FAD as cofactor.

The protein resides in the cytoplasm. The catalysed reaction is uridine(54) in tRNA + (6R)-5,10-methylene-5,6,7,8-tetrahydrofolate + NADH + H(+) = 5-methyluridine(54) in tRNA + (6S)-5,6,7,8-tetrahydrofolate + NAD(+). It carries out the reaction uridine(54) in tRNA + (6R)-5,10-methylene-5,6,7,8-tetrahydrofolate + NADPH + H(+) = 5-methyluridine(54) in tRNA + (6S)-5,6,7,8-tetrahydrofolate + NADP(+). Its function is as follows. Catalyzes the folate-dependent formation of 5-methyl-uridine at position 54 (M-5-U54) in all tRNAs. The chain is Methylenetetrahydrofolate--tRNA-(uracil-5-)-methyltransferase TrmFO from Zymomonas mobilis subsp. mobilis (strain ATCC 31821 / ZM4 / CP4).